We begin with the raw amino-acid sequence, 634 residues long: Sodium-dependent neutral amino acid transporter B(0)AT1 (634 aa).

The Cytoplasmic portion of the chain corresponds to 1-41 (MVRLVLPNPGLDARIPSLAELETIEQEEASSRPKWDNKAQY). A Phosphoserine modification is found at Ser-17. The helical transmembrane segment at 42–62 (MLTCLGFCVGLGNVWRFPYLC) threads the bilayer. Residues 63 to 67 (QSHGG) are Extracellular-facing. The chain crosses the membrane as a helical span at residues 68–88 (GAFMIPFLILLVLEGIPLLYL). The Cytoplasmic portion of the chain corresponds to 89–120 (EFAIGQRLRRGSLGVWSSIHPALKGLGLASML). A helical membrane pass occupies residues 121 to 141 (TSFMVGLYYNTIISWIMWYLF). Topologically, residues 142–192 (NSFQEPLPWSDCPLNENQTGYVDECARSSPVDYFWYRETLNISTSISDSGS) are extracellular. 2 N-linked (GlcNAc...) asparagine glycosylation sites follow: Asn-158 and Asn-182. A helical membrane pass occupies residues 193-213 (IQWWMLLCLACAWSVLYMCTI). Residues 214–221 (RGIETTGK) are Cytoplasmic-facing. The chain crosses the membrane as a helical span at residues 222-242 (AVYITSTLPYVVLTIFLIRGL). Topologically, residues 243-268 (TLKGATNGIVFLFTPNVTELAQPDTW) are extracellular. A glycan (N-linked (GlcNAc...) asparagine) is linked at Asn-258. Residues 269–289 (LDAGAQVFFSFSLAFGGLISF) form a helical membrane-spanning segment. Residues 290 to 304 (SSYNSVHNNCEKDSV) lie on the Cytoplasmic side of the membrane. Residues 305–325 (IVSIINGFTSVYVAIVVYSVI) traverse the membrane as a helical segment. Residues 326–413 (GFRATQRYDD…TEAITKMPLS (88 aa)) lie on the Extracellular side of the membrane. Asn-354 and Asn-368 each carry an N-linked (GlcNAc...) asparagine glycan. Residues 414 to 434 (PLWSVLFFIMLFCLGLSSMFG) traverse the membrane as a helical segment. Residues 435–456 (NMEGVVVPLQDLRVIPPKWPKE) are Cytoplasmic-facing. Residues 457 to 477 (VLTGLICLGTFLIGFIFTLNS) form a helical membrane-spanning segment. At 478-490 (GQYWLSLLDSYAG) the chain is on the extracellular side. Residues 491 to 511 (SIPLLIIAFCEMFSVVYVYGV) form a helical membrane-spanning segment. The Cytoplasmic portion of the chain corresponds to 512–531 (DRFNKDIEFMIGHKPNIFWQ). The helical transmembrane segment at 532–552 (VTWRVVSPLLMLIIFLFFFVV) threads the bilayer. Residues 553–581 (EVSQELTYSIWDPGYEEFPKSQKISYPNW) are Extracellular-facing. The helical transmembrane segment at 582–602 (VYVVVVIVAGVPSLTIPGYAI) threads the bilayer. The Cytoplasmic portion of the chain corresponds to 603–634 (YKLIRNHCQKPGDHQGLVSTLSTASMNGDLKY). Ser-627 is modified (phosphoserine).

It belongs to the sodium:neurotransmitter symporter (SNF) (TC 2.A.22) family. SLC6A19 subfamily. Interacts in a tissue-specific manner with ACE2 in small intestine and with CLTRN in the kidney. Interacts with CLTRN; this interaction is required for trafficking of SLC6A19 to the plasma membrane and for its catalytic activation in kidneys. Interacts with ACE2; this interaction is required for trafficking of SLC6A19 to the plasma membrane and for its catalytic activation in intestine. Interacts with ANPEP; the interaction positively regulates its amino acid transporter activity. As to expression, robust expression in kidney and small intestine, with minimal expression in pancreas. Also expressed in stomach, liver, duodenum, ileocecum, colon and prostate. Not detected in testis, whole brain, cerebellum, fetal liver, spleen, skeletal muscle, uterus, heart or lung.

Its subcellular location is the cell membrane. The protein resides in the apical cell membrane. It carries out the reaction L-alanine(in) + Na(+)(in) = L-alanine(out) + Na(+)(out). It catalyses the reaction L-cysteine(in) + Na(+)(in) = L-cysteine(out) + Na(+)(out). The enzyme catalyses L-glutamine(in) + Na(+)(in) = L-glutamine(out) + Na(+)(out). The catalysed reaction is glycine(in) + Na(+)(in) = glycine(out) + Na(+)(out). It carries out the reaction L-isoleucine(in) + Na(+)(in) = L-isoleucine(out) + Na(+)(out). It catalyses the reaction L-leucine(in) + Na(+)(in) = L-leucine(out) + Na(+)(out). The enzyme catalyses L-methionine(in) + Na(+)(in) = L-methionine(out) + Na(+)(out). The catalysed reaction is L-phenylalanine(in) + Na(+)(in) = L-phenylalanine(out) + Na(+)(out). It carries out the reaction L-serine(in) + Na(+)(in) = L-serine(out) + Na(+)(out). It catalyses the reaction L-tryptophan(in) + Na(+)(in) = L-tryptophan(out) + Na(+)(out). The enzyme catalyses L-tyrosine(in) + Na(+)(in) = L-tyrosine(out) + Na(+)(out). The catalysed reaction is L-valine(in) + Na(+)(in) = L-valine(out) + Na(+)(out). Functionally, transporter that mediates resorption of neutral amino acids across the apical membrane of renal and intestinal epithelial cells. This uptake is sodium-dependent and chloride-independent. Requires CLTRN in kidney or ACE2 in intestine for cell surface expression and amino acid transporter activity. The chain is Sodium-dependent neutral amino acid transporter B(0)AT1 (SLC6A19) from Homo sapiens (Human).